Here is a 547-residue protein sequence, read N- to C-terminus: Puff-specific protein Bx42 (547 aa).

The segment at 177–343 (AQYIRYTPSQ…AREERAGLRN (167 aa)) is SNW. 2 positions are modified to phosphoserine: serine 227 and serine 235. 2 disordered regions span residues 333–398 (RARE…ERDI) and 486–547 (QFSG…SKRD). 2 stretches are compositionally biased toward basic and acidic residues: residues 358 to 398 (EVRE…ERDI) and 526 to 539 (KRAE…SSHS).

Belongs to the SNW family.

It localises to the nucleus. May play a role in chromatin structure and function. The sequence is that of Puff-specific protein Bx42 (Bx42) from Drosophila melanogaster (Fruit fly).